The sequence spans 68 residues: Conotoxin Cal12.1p1 (68 aa).

A propeptide spanning residues 1–23 (DLITNSYTRGKPRHVTSWRNLRT) is cleaved from the precursor.

Contains 4 disulfide bonds. In terms of tissue distribution, expressed by the venom duct.

It localises to the secreted. In Californiconus californicus (California cone), this protein is Conotoxin Cal12.1p1.